A 132-amino-acid chain; its full sequence is Small ribosomal subunit protein uS8 (132 aa).

It belongs to the universal ribosomal protein uS8 family. As to quaternary structure, part of the 30S ribosomal subunit. Contacts proteins S5 and S12.

Its function is as follows. One of the primary rRNA binding proteins, it binds directly to 16S rRNA central domain where it helps coordinate assembly of the platform of the 30S subunit. The chain is Small ribosomal subunit protein uS8 from Xylella fastidiosa (strain M12).